The following is a 143-amino-acid chain: Glutaredoxin-2 (143 aa).

A mitochondrion-targeting transit peptide spans 1–30 (METNFSFDSNLIVIIIITLFATRIIAKRFL). A Phosphoserine modification is found at Ser37. Residues 41–143 (VAHVKDLIGQ…LAEILKPVFQ (103 aa)) form the Glutaredoxin domain. Glutathione is bound at residue 58–63 (KTYCPY). The residue at position 61 (Cys61) is an S-glutathionyl cysteine; alternate. A disulfide bridge links Cys61 with Cys64. Position 91 is a phosphoserine (Ser91). Residues Val109 and 122 to 123 (NS) each bind glutathione.

Belongs to the glutaredoxin family.

The protein localises to the cytoplasm. Its subcellular location is the mitochondrion. It catalyses the reaction 2 glutathione + H2O2 = glutathione disulfide + 2 H2O. It carries out the reaction 1-chloro-2,4-dinitrobenzene + glutathione = 2,4-dinitrophenyl-S-glutathione + chloride + H(+). The catalysed reaction is RX + glutathione = an S-substituted glutathione + a halide anion + H(+). Its function is as follows. Component of the glutathione system which performs several activities such as glutathione-dependent oxidoreductase, glutathione peroxidase and glutathione S-transferase (GST) activity. The disulfide bond functions as an electron carrier in the glutathione-dependent synthesis of deoxyribonucleotides by the enzyme ribonucleotide reductase. In addition, it is also involved in reducing cytosolic protein- and non-protein-disulfides in a coupled system with glutathione reductase. Required for resistance to reactive oxygen species (ROS) by directly reducing hydroperoxides and for the detoxification of ROS-mediated damage. GRX2 is more active as an oxidoreductase than GRX1. Responsible for the S-glutathionylation of DHBP synthase. The chain is Glutaredoxin-2 (GRX2) from Saccharomyces cerevisiae (strain ATCC 204508 / S288c) (Baker's yeast).